We begin with the raw amino-acid sequence, 121 residues long: MSDILDEIVIEDVVANCPQEFLQYHKCIRDNEENPGKCKDGRMILSTCIREKVPSVKSIMSECSEPMKKYDQCIRDNMGTRTINENCLGFLQDLRKCAELQVKNKNIKPSINGVNLELIKD.

CHCH domains follow at residues 14–56 and 60–105; these read VANC…VPSV and MSEC…VKNK. 4 consecutive short sequence motifs (cx9C motif) follow at residues 17–27, 38–48, 63–73, and 87–97; these read CPQEFLQYHKC, CKDGRMILSTC, CSEPMKKYDQC, and CLGFLQDLRKC. Cystine bridges form between Cys17–Cys48, Cys27–Cys38, Cys63–Cys97, and Cys73–Cys87.

It localises to the mitochondrion intermembrane space. The chain is Mitochondrial intermembrane space cysteine motif-containing protein MIX14 (MIX14) from Saccharomyces cerevisiae (strain ATCC 204508 / S288c) (Baker's yeast).